Consider the following 492-residue polypeptide: Thyroid hormone receptor alpha (492 aa).

A disordered region spans residues 1–33 (MEQKPSKVECGSDPEENSARSPDGKRKRKNGQC). Residues 1–52 (MEQKPSKVECGSDPEENSARSPDGKRKRKNGQCPLKSSMSGYIPSYLDKDEQ) are modulating. Residues Cys-53, Cys-56, Cys-70, Cys-73, Cys-91, Cys-97, Cys-107, and Cys-110 each contribute to the Zn(2+) site. NR C4-type zinc fingers lie at residues 53–73 (CVVCGDKATGYHYRCITCEGC) and 91–115 (CKYDSCCVIDKITRNQCQLCRFKKC). A DNA-binding region (nuclear receptor) is located at residues 53–127 (CVVCGDKATG…VGMAMDLVLD (75 aa)). The 245-residue stretch at 163–407 (EEWDLIHVAT…EGQQLLGMHV (245 aa)) folds into the NR LBD domain. The 3,3',5-triiodo-L-thyronine site is built by Arg-228 and Ser-277. A disordered region spans residues 457-492 (AVCGEDDSSEASSLSSSSSDEDTEVFEDLAGKAASP).

The protein belongs to the nuclear hormone receptor family. NR1 subfamily. In terms of assembly, binds DNA as a dimer; homodimer and heterodimer with RXRB. Interacts with NCOA3 and NCOA6 coactivators, leading to a strong increase of transcription of target genes. Probably interacts with SFPQ. Interacts with C1D. Interacts with AKAP13. Interacts with TP53INP2. Interacts with PER2. Isoform alpha-2 and isoform alpha-1 interact with TACC1, but the interaction with alpha-1 is weaker. The interaction with isoform alpha-1, but not alpha-2, is decreased in the presence of thyroid hormone T3.

Its subcellular location is the nucleus. It localises to the cytoplasm. Functionally, nuclear hormone receptor that can act as a repressor or activator of transcription. High affinity receptor for thyroid hormones, including triiodothyronine and thyroxine. The protein is Thyroid hormone receptor alpha (Thra) of Rattus norvegicus (Rat).